The sequence spans 530 residues: Autoinducer-2 kinase (530 aa).

Belongs to the FGGY kinase family.

The protein resides in the cytoplasm. The enzyme catalyses (S)-4,5-dihydroxypentane-2,3-dione + ATP = (2S)-2-hydroxy-3,4-dioxopentyl phosphate + ADP + H(+). Its function is as follows. Catalyzes the phosphorylation of autoinducer-2 (AI-2) to phospho-AI-2, which subsequently inactivates the transcriptional regulator LsrR and leads to the transcription of the lsr operon. Phosphorylates the ring-open form of (S)-4,5-dihydroxypentane-2,3-dione (DPD), which is the precursor to all AI-2 signaling molecules, at the C5 position. This chain is Autoinducer-2 kinase, found in Salmonella paratyphi B (strain ATCC BAA-1250 / SPB7).